The primary structure comprises 388 residues: 4-hydroxy-3-methylbut-2-en-1-yl diphosphate synthase (flavodoxin) (388 aa).

The [4Fe-4S] cluster site is built by Cys281, Cys284, Cys316, and Glu323.

This sequence belongs to the IspG family. [4Fe-4S] cluster serves as cofactor.

It catalyses the reaction (2E)-4-hydroxy-3-methylbut-2-enyl diphosphate + oxidized [flavodoxin] + H2O + 2 H(+) = 2-C-methyl-D-erythritol 2,4-cyclic diphosphate + reduced [flavodoxin]. Its pathway is isoprenoid biosynthesis; isopentenyl diphosphate biosynthesis via DXP pathway; isopentenyl diphosphate from 1-deoxy-D-xylulose 5-phosphate: step 5/6. In terms of biological role, converts 2C-methyl-D-erythritol 2,4-cyclodiphosphate (ME-2,4cPP) into 1-hydroxy-2-methyl-2-(E)-butenyl 4-diphosphate. The polypeptide is 4-hydroxy-3-methylbut-2-en-1-yl diphosphate synthase (flavodoxin) (Arthrobacter sp. (strain FB24)).